A 471-amino-acid polypeptide reads, in one-letter code: 3-isopropylmalate dehydratase large subunit (471 aa).

Cysteine 351, cysteine 412, and cysteine 415 together coordinate [4Fe-4S] cluster.

Belongs to the aconitase/IPM isomerase family. LeuC type 1 subfamily. As to quaternary structure, heterodimer of LeuC and LeuD. Requires [4Fe-4S] cluster as cofactor.

The catalysed reaction is (2R,3S)-3-isopropylmalate = (2S)-2-isopropylmalate. The protein operates within amino-acid biosynthesis; L-leucine biosynthesis; L-leucine from 3-methyl-2-oxobutanoate: step 2/4. Catalyzes the isomerization between 2-isopropylmalate and 3-isopropylmalate, via the formation of 2-isopropylmaleate. The polypeptide is 3-isopropylmalate dehydratase large subunit (Hahella chejuensis (strain KCTC 2396)).